A 51-amino-acid polypeptide reads, in one-letter code: Large ribosomal subunit protein eL39 (51 aa).

It belongs to the eukaryotic ribosomal protein eL39 family.

The sequence is that of Large ribosomal subunit protein eL39 from Methanococcus aeolicus (strain ATCC BAA-1280 / DSM 17508 / OCM 812 / Nankai-3).